Reading from the N-terminus, the 413-residue chain is Gamma-glutamyl phosphate reductase (413 aa).

It belongs to the gamma-glutamyl phosphate reductase family.

It is found in the cytoplasm. It catalyses the reaction L-glutamate 5-semialdehyde + phosphate + NADP(+) = L-glutamyl 5-phosphate + NADPH + H(+). Its pathway is amino-acid biosynthesis; L-proline biosynthesis; L-glutamate 5-semialdehyde from L-glutamate: step 2/2. Its function is as follows. Catalyzes the NADPH-dependent reduction of L-glutamate 5-phosphate into L-glutamate 5-semialdehyde and phosphate. The product spontaneously undergoes cyclization to form 1-pyrroline-5-carboxylate. The chain is Gamma-glutamyl phosphate reductase from Anoxybacillus flavithermus (strain DSM 21510 / WK1).